A 281-amino-acid polypeptide reads, in one-letter code: Insulin-like growth factor-binding protein 2 (281 aa).

The N-terminal stretch at Met-1–Ser-21 is a signal peptide. The IGFBP N-terminal domain maps to Val-23–Arg-106. Cystine bridges form between Cys-27–Cys-56, Cys-30–Cys-58, Cys-38–Cys-59, Cys-47–Cys-62, Cys-70–Cys-83, and Cys-77–Cys-103. Disordered regions lie at residues Arg-107–Asp-127 and Pro-139–Arg-180. A compositionally biased stretch (basic and acidic residues) spans Val-156–Lys-176. The region spanning Arg-180–Cys-262 is the Thyroglobulin type-1 domain. Cystine bridges form between Cys-183-Cys-217, Cys-228-Cys-239, and Cys-241-Cys-262. The short motif at Arg-257 to Asp-259 is the Cell attachment site element.

In terms of assembly, interacts with igf1 and igf2.

It localises to the secreted. Functionally, IGF-binding proteins prolong the half-life of the IGFs and have been shown to either inhibit or stimulate the growth promoting effects of the IGFs on cell culture. They alter the interaction of IGFs with their cell surface receptors. The sequence is that of Insulin-like growth factor-binding protein 2 (igfbp2) from Xenopus laevis (African clawed frog).